Here is a 212-residue protein sequence, read N- to C-terminus: Imidazole glycerol phosphate synthase subunit HisH (212 aa).

Residues 3–212 (DIAIVDYGMG…LGNFVRWKPV (210 aa)) form the Glutamine amidotransferase type-1 domain. C82 functions as the Nucleophile in the catalytic mechanism. Residues H191 and E193 contribute to the active site.

In terms of assembly, heterodimer of HisH and HisF.

Its subcellular location is the cytoplasm. The enzyme catalyses 5-[(5-phospho-1-deoxy-D-ribulos-1-ylimino)methylamino]-1-(5-phospho-beta-D-ribosyl)imidazole-4-carboxamide + L-glutamine = D-erythro-1-(imidazol-4-yl)glycerol 3-phosphate + 5-amino-1-(5-phospho-beta-D-ribosyl)imidazole-4-carboxamide + L-glutamate + H(+). The catalysed reaction is L-glutamine + H2O = L-glutamate + NH4(+). The protein operates within amino-acid biosynthesis; L-histidine biosynthesis; L-histidine from 5-phospho-alpha-D-ribose 1-diphosphate: step 5/9. Functionally, IGPS catalyzes the conversion of PRFAR and glutamine to IGP, AICAR and glutamate. The HisH subunit catalyzes the hydrolysis of glutamine to glutamate and ammonia as part of the synthesis of IGP and AICAR. The resulting ammonia molecule is channeled to the active site of HisF. The polypeptide is Imidazole glycerol phosphate synthase subunit HisH (Nitrosospira multiformis (strain ATCC 25196 / NCIMB 11849 / C 71)).